Here is a 1176-residue protein sequence, read N- to C-terminus: Leucine--tRNA ligase, cytoplasmic (1176 aa).

Residues Y52 and Y54 each contribute to the L-leucine site. Residues 60-63 carry the 'HIGH' region motif; that stretch reads HLGH. A disordered region spans residues 115-142; the sequence is PDFPDEEDEEEETNVKTEDTRIKDKAKG. Residues 117 to 126 show a composition bias toward acidic residues; the sequence is FPDEEDEEEE. The segment covering 127–139 has biased composition (basic and acidic residues); the sequence is TNVKTEDTRIKDK. Position 167 is a phosphoserine (S167). The editing domain stretch occupies residues 260-509; the sequence is GPQEYTLLKL…DAGDALIYME (250 aa). L594 and S597 together coordinate L-leucine. The 'KMSKS' region signature appears at 716 to 720; the sequence is KMSKS. K719 serves as a coordination point for ATP. S720 bears the Phosphoserine mark. An N6-acetyllysine mark is found at K970 and K1047.

Belongs to the class-I aminoacyl-tRNA synthetase family.

It is found in the cytoplasm. It carries out the reaction tRNA(Leu) + L-leucine + ATP = L-leucyl-tRNA(Leu) + AMP + diphosphate. It catalyses the reaction L-methionyl-tRNA(Leu) + H2O = tRNA(Leu) + L-methionine + H(+). With respect to regulation, 5-fluoro-1,3-dihydro-1-hydroxy-1,2-benzoxaborole inhibits LARS1 by forming a covalent adduct with the 3' adenosine of tRNA(Leu) at the editing site, thus locking the enzyme in an inactive conformation. Its function is as follows. Aminoacyl-tRNA synthetase that catalyzes the specific attachment of leucine to its cognate tRNA (tRNA(Leu)). It performs tRNA aminoacylation in a two-step reaction: Leu is initially activated by ATP to form a leucyl-adenylate (Leu-AMP) intermediate; then the leucyl moiety is transferred to the acceptor 3' end of the tRNA to yield leucyl-tRNA. To improve the fidelity of catalytic reactions, it is also able to hydrolyze misactivated aminoacyl-adenylate intermediates (pre-transfer editing) and mischarged aminoacyl-tRNAs (post-transfer editing). This is Leucine--tRNA ligase, cytoplasmic (LARS1) from Pongo abelii (Sumatran orangutan).